Here is a 500-residue protein sequence, read N- to C-terminus: Dipeptide and tripeptide permease A (500 aa).

Residues Met1–Lys21 are Cytoplasmic-facing. A helical transmembrane segment spans residues Ala22–Met44. The Periplasmic portion of the chain corresponds to Ala45 to Ser59. Residues Ile60–Leu80 traverse the membrane as a helical segment. Over Gly81–Arg89 the chain is Cytoplasmic. Residues Val90–His110 traverse the membrane as a helical segment. Asp111 is a topological domain (periplasmic). Residues Ala112 to Asn132 traverse the membrane as a helical segment. Residues Pro133–Thr153 lie on the Cytoplasmic side of the membrane. A helical membrane pass occupies residues Met154 to Ala174. Over Ala175–Gly178 the chain is Periplasmic. Residues Trp179–Phe199 traverse the membrane as a helical segment. At Cys200–Arg219 the chain is on the cytoplasmic side. Residues Asn220 to His240 form a helical membrane-spanning segment. Topologically, residues Asn241–Arg246 are periplasmic. The chain crosses the membrane as a helical span at residues Met247–Met267. Topologically, residues Lys268 to Lys274 are cytoplasmic. Residues Met275–Met295 traverse the membrane as a helical segment. The Periplasmic portion of the chain corresponds to Pro296–Gln320. Residues Tyr321–Asn341 traverse the membrane as a helical segment. Residues Lys342–Lys352 are Cytoplasmic-facing. Residues Phe353–Phe373 traverse the membrane as a helical segment. At Ala374–Gly378 the chain is on the periplasmic side. A helical membrane pass occupies residues Ile379–Ile399. The Cytoplasmic segment spans residues Ser400–Arg414. The helical transmembrane segment at Leu415–Gly435 threads the bilayer. The Periplasmic portion of the chain corresponds to Tyr436–Arg459. A helical membrane pass occupies residues Val460–Pro480. The Cytoplasmic segment spans residues Lys481 to Ala500.

This sequence belongs to the major facilitator superfamily. Proton-dependent oligopeptide transporter (POT/PTR) (TC 2.A.17) family. DtpA subfamily. Monomer. Has a crown-like structure with a diameter of 8 nm and a central density.

It localises to the cell inner membrane. Proton-dependent permease that transports di- and tripeptides as well as structurally related peptidomimetics such as aminocephalosporins into the cell. Has a clear preference for dipeptides and tripeptides composed of L-amino acids, and discriminates dipeptides on the basis of the position of charges within the substrate. In Escherichia coli (strain K12), this protein is Dipeptide and tripeptide permease A (dtpA).